Here is a 116-residue protein sequence, read N- to C-terminus: Nitrogenase-stabilizing/protective protein NifW (116 aa).

This sequence belongs to the NifW family. As to quaternary structure, homotrimer; associates with NifD.

Its function is as follows. May protect the nitrogenase Fe-Mo protein from oxidative damage. The sequence is that of Nitrogenase-stabilizing/protective protein NifW from Rhodopseudomonas palustris (strain ATCC BAA-98 / CGA009).